Here is a 285-residue protein sequence, read N- to C-terminus: VQ motif-containing protein 20 (285 aa).

Over residues 1–10 (MSSTYKDNHP) the composition is skewed to basic and acidic residues. The disordered stretch occupies residues 1-68 (MSSTYKDNHP…PSPSSFSSAA (68 aa)). Residues 11–23 (YHHHPHHHHHHPK) are compositionally biased toward basic residues. The VQ signature appears at 91–100 (FMALVQKLTG). The tract at residues 195–218 (YSAVAIPPQPPPHPPPPPPPPSMY) is disordered. A compositionally biased stretch (pro residues) spans 201 to 216 (PPQPPPHPPPPPPPPS).

The protein localises to the nucleus. May function as negative regulator of plant defense. The chain is VQ motif-containing protein 20 from Arabidopsis thaliana (Mouse-ear cress).